The chain runs to 144 residues: 3-dehydroquinate dehydratase (144 aa).

Tyrosine 22 (proton acceptor) is an active-site residue. The substrate site is built by asparagine 71, histidine 77, and aspartate 84. The active-site Proton donor is the histidine 97. Residues 98–99 (IS) and arginine 108 contribute to the substrate site.

This sequence belongs to the type-II 3-dehydroquinase family. Homododecamer.

It carries out the reaction 3-dehydroquinate = 3-dehydroshikimate + H2O. It participates in metabolic intermediate biosynthesis; chorismate biosynthesis; chorismate from D-erythrose 4-phosphate and phosphoenolpyruvate: step 3/7. Functionally, catalyzes a trans-dehydration via an enolate intermediate. The chain is 3-dehydroquinate dehydratase (aroQ) from Thermotoga maritima (strain ATCC 43589 / DSM 3109 / JCM 10099 / NBRC 100826 / MSB8).